We begin with the raw amino-acid sequence, 201 residues long: Small ribosomal subunit protein uS4c (201 aa).

The S4 RNA-binding domain occupies 89–151 (MRLDNILFRL…QKSKTLIQNY (63 aa)).

The protein belongs to the universal ribosomal protein uS4 family. Part of the 30S ribosomal subunit. Contacts protein S5. The interaction surface between S4 and S5 is involved in control of translational fidelity.

The protein localises to the plastid. The protein resides in the chloroplast. Its function is as follows. One of the primary rRNA binding proteins, it binds directly to 16S rRNA where it nucleates assembly of the body of the 30S subunit. With S5 and S12 plays an important role in translational accuracy. The polypeptide is Small ribosomal subunit protein uS4c (rps4) (Phaseolus vulgaris (Kidney bean)).